Reading from the N-terminus, the 164-residue chain is MNKVLAIVLTITVAGFAQTAFADDHAMSPDMKLLAGASNWVNQSGSVAQFVFTPSPTQPQTYEVSGNYINNAQGTGCKGTPYPLSGAYYSGNQIISFSVVWSNASANCQSATGWTGYFDFSGSQAVLKTDWNLAFYSGSTPAIQQGQDDFMQSVATVSESLLTE.

Residues 1 to 22 (MNKVLAIVLTITVAGFAQTAFA) form the signal peptide. The Avidin-like domain maps to 32-155 (KLLAGASNWV…GQDDFMQSVA (124 aa)). Biotin contacts are provided by N42, S46, Y68, N70, and G76. C77 and C108 are joined by a disulfide. The biotin site is built by S110, T112, and D148.

This sequence belongs to the avidin/streptavidin family. In terms of assembly, exhibits a dynamic oligomeric assembly: the apo form exits as homooctamers, which dissociate into homodimers upon biotin binding. The X-ray structure of the intact hoefavidin reveals unique crystal packing generated by an octameric cylindrical structure wherein the C-terminal segments of each monomer are introduced into the entrance of the biotin-binding site of an adjacent non-canonical monomer.

It localises to the secreted. The exact role played by hoefavidin in the host organism is still obscure. Forms a strong non-covalent complex with biotin and 2-iminobiotin. This Hoeflea phototrophica (strain DSM 17068 / NCIMB 14078 / DFL-43) protein is Hoefavidin.